The chain runs to 404 residues: Phosphopentomutase (404 aa).

Residues aspartate 10, aspartate 303, histidine 308, aspartate 344, histidine 345, and histidine 356 each contribute to the Mn(2+) site.

The protein belongs to the phosphopentomutase family. It depends on Mn(2+) as a cofactor.

It localises to the cytoplasm. The catalysed reaction is 2-deoxy-alpha-D-ribose 1-phosphate = 2-deoxy-D-ribose 5-phosphate. It catalyses the reaction alpha-D-ribose 1-phosphate = D-ribose 5-phosphate. Its pathway is carbohydrate degradation; 2-deoxy-D-ribose 1-phosphate degradation; D-glyceraldehyde 3-phosphate and acetaldehyde from 2-deoxy-alpha-D-ribose 1-phosphate: step 1/2. Functionally, isomerase that catalyzes the conversion of deoxy-ribose 1-phosphate (dRib-1-P) and ribose 1-phosphate (Rib-1-P) to deoxy-ribose 5-phosphate (dRib-5-P) and ribose 5-phosphate (Rib-5-P), respectively. The chain is Phosphopentomutase from Shewanella baltica (strain OS185).